The primary structure comprises 113 residues: uncharacterized protein (113 aa).

A signal peptide spans 1–20 (MMKKSILAFLLLTSSAAALA).

This is an uncharacterized protein from Escherichia coli (strain K12).